The chain runs to 344 residues: N-acetyl-gamma-glutamyl-phosphate reductase (344 aa).

The active site involves Cys148.

This sequence belongs to the NAGSA dehydrogenase family. Type 1 subfamily.

The protein localises to the cytoplasm. It carries out the reaction N-acetyl-L-glutamate 5-semialdehyde + phosphate + NADP(+) = N-acetyl-L-glutamyl 5-phosphate + NADPH + H(+). It participates in amino-acid biosynthesis; L-arginine biosynthesis; N(2)-acetyl-L-ornithine from L-glutamate: step 3/4. Functionally, catalyzes the NADPH-dependent reduction of N-acetyl-5-glutamyl phosphate to yield N-acetyl-L-glutamate 5-semialdehyde. This is N-acetyl-gamma-glutamyl-phosphate reductase from Clostridium beijerinckii (strain ATCC 51743 / NCIMB 8052) (Clostridium acetobutylicum).